The primary structure comprises 170 residues: Class I hydrophobin E (170 aa).

The first 19 residues, 1-19 (MQLTTLLTGLISVLSVTTA), serve as a signal peptide directing secretion. 4 disulfides stabilise this stretch: Cys62-Cys126, Cys70-Cys117, Cys71-Cys105, and Cys127-Cys139.

It belongs to the fungal hydrophobin family.

It localises to the secreted. It is found in the cell wall. Its function is as follows. Aerial growth, conidiation, and dispersal of filamentous fungi in the environment rely upon a capability of their secreting small amphipathic proteins called hydrophobins (HPBs) with low sequence identity. Class I can self-assemble into an outermost layer of rodlet bundles on aerial cell surfaces, conferring cellular hydrophobicity that supports fungal growth, development and dispersal; whereas Class II form highly ordered films at water-air interfaces through intermolecular interactions but contribute nothing to the rodlet structure. In P.expansum, hydrophobins contribute to germination, tolerance to cold stress and mycotoxins patulin and citrinin production. This chain is Class I hydrophobin E, found in Penicillium expansum (Blue mold rot fungus).